A 257-amino-acid chain; its full sequence is Lipid A 4'-phosphatase (257 aa).

Helical transmembrane passes span 21-41, 85-105, 119-139, 174-194, 201-221, and 225-245; these read FGAFLLLFWTWWALLAVFRAF, IFFRLPYVVAIVMAWKLIECY, KLKVGLGALLIGPVLLVNVIL, CSFVSGEAASAGWLFCLLLFV, ALVPPVAAISILTPAMRLSFG, and LSDVTLGWLSSLVVFAALLAL.

It belongs to the lipid A LpxF 4'-phosphatase family.

It is found in the cell inner membrane. It functions in the pathway bacterial outer membrane biogenesis; LPS lipid A biosynthesis. Probably removes the 4'-phosphate moiety from lipid A species. Not seen to act on other membrane components, nor does it dephosphorylate the 1-phosphate group of lipid A and/or lipid A precursors. This is Lipid A 4'-phosphatase from Rhizobium etli (strain ATCC 51251 / DSM 11541 / JCM 21823 / NBRC 15573 / CFN 42).